The chain runs to 250 residues: Envelope glycoprotein L (250 aa).

The N-terminal stretch at 1 to 18 (MELLLFVMSLILLTFSKA) is a signal peptide. The gL betaherpesvirus-type domain maps to 31-239 (KLDDCIAAVI…ETYNSKLPFR (209 aa)). Residues Cys-136 and Cys-141 are joined by a disulfide bond.

Belongs to the herpesviridae glycoprotein L (gL) family. Betaherpesvirinae gL subfamily. In terms of assembly, interacts with glycoprotein H (gH); this interaction is necessary for the correct processing and cell surface expression of gH. Part of a gH-gL-gO complex.

The protein localises to the virion membrane. It is found in the host cell membrane. It localises to the host Golgi apparatus. Its subcellular location is the host trans-Golgi network. Functionally, the heterodimer glycoprotein H-glycoprotein L is required for the fusion of viral and plasma membranes leading to virus entry into the host cell. Acts as a functional inhibitor of gH and maintains gH in an inhibited form. Upon binding to host integrins, gL dissociates from gH leading to activation of the viral fusion glycoproteins gB and gH. This Human herpesvirus 6A (strain Uganda-1102) (HHV-6 variant A) protein is Envelope glycoprotein L.